Reading from the N-terminus, the 204-residue chain is Large ribosomal subunit protein uL4 (204 aa).

Residues 56–79 (VSGTTAKPYGQKRTGRARQGSLRS) form a disordered region.

It belongs to the universal ribosomal protein uL4 family. In terms of assembly, part of the 50S ribosomal subunit.

One of the primary rRNA binding proteins, this protein initially binds near the 5'-end of the 23S rRNA. It is important during the early stages of 50S assembly. It makes multiple contacts with different domains of the 23S rRNA in the assembled 50S subunit and ribosome. Its function is as follows. Forms part of the polypeptide exit tunnel. The protein is Large ribosomal subunit protein uL4 of Wolbachia pipientis subsp. Culex pipiens (strain wPip).